The following is a 776-amino-acid chain: MRRFSTLSRRLQRVVPASSASTANTSPSPALYTGLEPKIKESQDSLIRAVFDNGDVWQDFSQKSVAKPKQSRSITGFINYLTNESDYETGLFMNDFLKTPAGFQKYTAASIEEAGQLIQQLLGALTQRDKLRHAITTFDRLSDVLCQVIDLAEFIRAAHPEQHFVQAAQEAHEQMYEYMNVLNTSVELYTVLDMVFKDSEIVNQLTHEEKVVGTLLLEDFKKSGVTLDDAGRENFVSLTTKISLLGRDFISSNHPKEDYITLTQGEAQGLDPQLAQQLSQGNSVYVPTGGVPGQLALRGMKNENSRKLLWSKMRESSDKSIESLEDLLVSRLELANLMGKESYADYLLSDKMAGNPENVMRFLNGLLDKTLPGAKKELSVLEQIKKQATGNPKSILQAWDKSYYASQLLYQKRNKTKTAHMLSEYFSVGTVVQGLSRIFDKIYGIRFVPTETKTGETWHHDVRRLDVVSETEGLIGIMYADLFQREGKSPNPAHFTVRCSREIYPDELAHMSSSPIAKVPTLNLNGKVFQIPTIALICDFTTPHDLYPSLLSYQEVETLFHEMGHAIHSMLGRTSLHNVCGTRCATDFVELPSVFMENFASNPESLALFARHYSSDSPLPYQQLERHLNEQSYFKDVEQYTQIKMAMLDQVLHGNILKSITNGHFNSQKLYDNLEKDRPLFPPSPSSWHGSFGHLFGYGASYYCYLLDRQMADIVWKKLFSKNPLSRDAGSRMKNEVLQWGGSRDPWECIAGVLEDPELAKGGSQAMEKIGNYDKH.

The N-terminal 28 residues, 1 to 28 (MRRFSTLSRRLQRVVPASSASTANTSPS), are a transit peptide targeting the mitochondrion. His-561 contributes to the Zn(2+) binding site. Glu-562 is a catalytic residue. Zn(2+)-binding residues include His-565 and His-568.

Belongs to the peptidase M3 family. Zn(2+) serves as cofactor.

It localises to the mitochondrion matrix. It catalyses the reaction Release of an N-terminal octapeptide as second stage of processing of some proteins imported into the mitochondrion.. In terms of biological role, cleaves proteins, imported into the mitochondrion, to their mature size. While most mitochondrial precursor proteins are processed to the mature form in one step by mitochondrial processing peptidase (MPP), the sequential cleavage by MIP of an octapeptide after initial processing by MPP is a required step for a subgroup of nuclear-encoded precursor proteins destined for the matrix or the inner membrane. The chain is Mitochondrial intermediate peptidase (OCT1) from Yarrowia lipolytica (strain CLIB 122 / E 150) (Yeast).